Here is a 765-residue protein sequence, read N- to C-terminus: Cullin-5 (765 aa).

In terms of domain architecture, Cullin neddylation spans R696–D757. K709 participates in a covalent cross-link: Glycyl lysine isopeptide (Lys-Gly) (interchain with G-Cter in NEDD8).

It belongs to the cullin family. As to quaternary structure, interacts with rbx-1 and rbx-2. Neddylated; which enhances the ubiquitination activity of SCF-like complex.

It participates in protein modification; protein ubiquitination. Functionally, probable core component of cullin-based SCF-like E3 ubiquitin-protein ligase complexes which mediate the ubiquitination and subsequent proteasomal degradation of target proteins. In association with rbx-2 seems to be involved in meiotic cell cycle progression in the germline. Required for phosphorylation of the MAP kinase MPK-1 in the germline. This chain is Cullin-5 (cul-5), found in Caenorhabditis elegans.